The primary structure comprises 341 residues: Heme A synthase (341 aa).

A run of 5 helical transmembrane segments spans residues 11–31, 101–121, 127–147, 160–180, and 194–214; these read AVST…IIGG, LIGL…HLSA, LFGL…MVAS, LATH…FSLE, and AGVT…GAFV. His259 is a binding site for heme. 3 helical membrane-spanning segments follow: residues 261–278, 288–308, and 315–335; these read WTGY…WQVW, FMVI…AALL, and LSLA…AAAW. His319 contacts heme.

This sequence belongs to the COX15/CtaA family. Type 2 subfamily. Interacts with CtaB. The cofactor is heme b.

The protein localises to the cell membrane. It carries out the reaction Fe(II)-heme o + 2 A + H2O = Fe(II)-heme a + 2 AH2. It participates in porphyrin-containing compound metabolism; heme A biosynthesis; heme A from heme O: step 1/1. Its function is as follows. Catalyzes the conversion of heme O to heme A by two successive hydroxylations of the methyl group at C8. The first hydroxylation forms heme I, the second hydroxylation results in an unstable dihydroxymethyl group, which spontaneously dehydrates, resulting in the formyl group of heme A. This chain is Heme A synthase, found in Maricaulis maris (strain MCS10) (Caulobacter maris).